Here is a 316-residue protein sequence, read N- to C-terminus: Galectin-8 (316 aa).

Galectin domains are found at residues 18–151 and 186–316; these read YVST…IGFR and FEAR…VRSW. 3 residues coordinate a carbohydrate: Arg-68, Asn-78, and Glu-88. Residue 248–254 participates in a beta-D-galactoside binding; the sequence is WGEEERN.

As to quaternary structure, homodimer. Interacts with CALCOCO2/NDP52. Interacts with PDPN; the interaction is glycosylation-dependent; may participate in connection of the lymphatic endothelium to the surrounding extracellular matrix. As to expression, expressed in liver, kidney, cardiac muscle, lung, and brain.

Its subcellular location is the cytoplasmic vesicle. The protein resides in the cytoplasm. It localises to the cytosol. Its function is as follows. Beta-galactoside-binding lectin that acts as a sensor of membrane damage caused by infection and restricts the proliferation of infecting pathogens by targeting them for autophagy. Detects membrane rupture by binding beta-galactoside ligands located on the lumenal side of the endosome membrane; these ligands becoming exposed to the cytoplasm following rupture. Restricts infection by initiating autophagy via interaction with CALCOCO2/NDP52. Required to restrict infection of bacterial invasion such as S.typhimurium. Also required to restrict infection of Picornaviridae viruses. Has a marked preference for 3'-O-sialylated and 3'-O-sulfated glycans. This chain is Galectin-8 (Lgals8), found in Rattus norvegicus (Rat).